Here is a 754-residue protein sequence, read N- to C-terminus: 5-methyltetrahydropteroyltriglutamate--homocysteine methyltransferase (754 aa).

5-methyltetrahydropteroyltri-L-glutamate is bound by residues 15-18 and lysine 114; that span reads RELK. Residues 430-432 and glutamate 483 contribute to the L-homocysteine site; that span reads IGS. L-methionine-binding positions include 430–432 and glutamate 483; that span reads IGS. 5-methyltetrahydropteroyltri-L-glutamate-binding positions include 514-515 and tryptophan 560; that span reads RC. Aspartate 598 serves as a coordination point for L-homocysteine. Aspartate 598 contributes to the L-methionine binding site. A 5-methyltetrahydropteroyltri-L-glutamate-binding site is contributed by glutamate 604. 3 residues coordinate Zn(2+): histidine 641, cysteine 643, and glutamate 665. Histidine 694 acts as the Proton donor in catalysis. Residue cysteine 726 participates in Zn(2+) binding.

It belongs to the vitamin-B12 independent methionine synthase family. The cofactor is Zn(2+).

It catalyses the reaction 5-methyltetrahydropteroyltri-L-glutamate + L-homocysteine = tetrahydropteroyltri-L-glutamate + L-methionine. It functions in the pathway amino-acid biosynthesis; L-methionine biosynthesis via de novo pathway; L-methionine from L-homocysteine (MetE route): step 1/1. Functionally, catalyzes the transfer of a methyl group from 5-methyltetrahydrofolate to homocysteine resulting in methionine formation. This chain is 5-methyltetrahydropteroyltriglutamate--homocysteine methyltransferase, found in Campylobacter jejuni subsp. doylei (strain ATCC BAA-1458 / RM4099 / 269.97).